We begin with the raw amino-acid sequence, 693 residues long: Heat shock protein homolog SSE2 (693 aa).

The tract at residues 653–693 (LRANQETSKMNDIAEKLAEQRRARAASDDSDDNNDENMDLD) is disordered. The segment covering 664 to 679 (DIAEKLAEQRRARAAS) has biased composition (basic and acidic residues). Residues 680–693 (DDSDDNNDENMDLD) are compositionally biased toward acidic residues.

Belongs to the heat shock protein 70 family.

Has a calcium-dependent calmodulin-binding activity. This is Heat shock protein homolog SSE2 (SSE2) from Saccharomyces cerevisiae (strain ATCC 204508 / S288c) (Baker's yeast).